The primary structure comprises 159 residues: Odorant-binding protein (159 aa).

This sequence belongs to the calycin superfamily. Lipocalin family. In terms of assembly, homodimer.

Its subcellular location is the secreted. Functionally, this protein binds a wide variety of chemical odorants. In Bos taurus (Bovine), this protein is Odorant-binding protein.